Here is a 182-residue protein sequence, read N- to C-terminus: ATP synthase subunit delta (182 aa).

This sequence belongs to the ATPase delta chain family. In terms of assembly, F-type ATPases have 2 components, F(1) - the catalytic core - and F(0) - the membrane proton channel. F(1) has five subunits: alpha(3), beta(3), gamma(1), delta(1), epsilon(1). F(0) has three main subunits: a(1), b(2) and c(10-14). The alpha and beta chains form an alternating ring which encloses part of the gamma chain. F(1) is attached to F(0) by a central stalk formed by the gamma and epsilon chains, while a peripheral stalk is formed by the delta and b chains.

The protein localises to the cell membrane. F(1)F(0) ATP synthase produces ATP from ADP in the presence of a proton or sodium gradient. F-type ATPases consist of two structural domains, F(1) containing the extramembraneous catalytic core and F(0) containing the membrane proton channel, linked together by a central stalk and a peripheral stalk. During catalysis, ATP synthesis in the catalytic domain of F(1) is coupled via a rotary mechanism of the central stalk subunits to proton translocation. Functionally, this protein is part of the stalk that links CF(0) to CF(1). It either transmits conformational changes from CF(0) to CF(1) or is implicated in proton conduction. This Desulforudis audaxviator (strain MP104C) protein is ATP synthase subunit delta.